Here is a 425-residue protein sequence, read N- to C-terminus: Serine hydroxymethyltransferase (425 aa).

(6S)-5,6,7,8-tetrahydrofolate is bound by residues Leu-126 and 130-132 (GHL). N6-(pyridoxal phosphate)lysine is present on Lys-234.

Belongs to the SHMT family. Homodimer. Requires pyridoxal 5'-phosphate as cofactor.

Its subcellular location is the cytoplasm. The catalysed reaction is (6R)-5,10-methylene-5,6,7,8-tetrahydrofolate + glycine + H2O = (6S)-5,6,7,8-tetrahydrofolate + L-serine. Its pathway is one-carbon metabolism; tetrahydrofolate interconversion. It participates in amino-acid biosynthesis; glycine biosynthesis; glycine from L-serine: step 1/1. In terms of biological role, catalyzes the reversible interconversion of serine and glycine with tetrahydrofolate (THF) serving as the one-carbon carrier. This reaction serves as the major source of one-carbon groups required for the biosynthesis of purines, thymidylate, methionine, and other important biomolecules. Also exhibits THF-independent aldolase activity toward beta-hydroxyamino acids, producing glycine and aldehydes, via a retro-aldol mechanism. The sequence is that of Serine hydroxymethyltransferase from Desulfotalea psychrophila (strain LSv54 / DSM 12343).